Reading from the N-terminus, the 575-residue chain is Proline--tRNA ligase, cytoplasmic (575 aa).

The protein belongs to the class-II aminoacyl-tRNA synthetase family.

Its subcellular location is the cytoplasm. It carries out the reaction tRNA(Pro) + L-proline + ATP = L-prolyl-tRNA(Pro) + AMP + diphosphate. This is Proline--tRNA ligase, cytoplasmic (PRS) from Candida albicans (Yeast).